Reading from the N-terminus, the 603-residue chain is UvrABC system protein C (603 aa).

The region spanning 13–92 (SSPGVYLMKD…IKQHHPKYNV (80 aa)) is the GIY-YIG domain. A UVR domain is found at 205–240 (EEVVKDLEKVIQKASDNLEFEQAANYYRTLSLIKQA).

The protein belongs to the UvrC family. As to quaternary structure, interacts with UvrB in an incision complex.

It localises to the cytoplasm. Its function is as follows. The UvrABC repair system catalyzes the recognition and processing of DNA lesions. UvrC both incises the 5' and 3' sides of the lesion. The N-terminal half is responsible for the 3' incision and the C-terminal half is responsible for the 5' incision. The sequence is that of UvrABC system protein C from Chlamydia pneumoniae (Chlamydophila pneumoniae).